A 151-amino-acid chain; its full sequence is Transcription antitermination protein NusB (151 aa).

This sequence belongs to the NusB family.

Its function is as follows. Involved in transcription antitermination. Required for transcription of ribosomal RNA (rRNA) genes. Binds specifically to the boxA antiterminator sequence of the ribosomal RNA (rrn) operons. The polypeptide is Transcription antitermination protein NusB (Photobacterium profundum (strain SS9)).